Reading from the N-terminus, the 115-residue chain is uncharacterized protein (115 aa).

Positions 1–26 (MNFKKTVVSALSISALALSVSGVASA) are cleaved as a signal peptide. Residues 36-114 (VKNISISPTH…AVFGKVYVTV (79 aa)) form the BIG2 domain.

This is an uncharacterized protein from Bacillus subtilis (strain 168).